Here is a 115-residue protein sequence, read N- to C-terminus: Large ribosomal subunit protein bL19 (115 aa).

The protein belongs to the bacterial ribosomal protein bL19 family.

Its function is as follows. This protein is located at the 30S-50S ribosomal subunit interface and may play a role in the structure and function of the aminoacyl-tRNA binding site. In Pectobacterium atrosepticum (strain SCRI 1043 / ATCC BAA-672) (Erwinia carotovora subsp. atroseptica), this protein is Large ribosomal subunit protein bL19.